Here is a 156-residue protein sequence, read N- to C-terminus: Snaclec A12 (156 aa).

An N-terminal signal peptide occupies residues 1–23 (MGRSISVSFGLLVVFLSLSGTGA). Disulfide bonds link Cys27-Cys38, Cys55-Cys148, and Cys123-Cys140. The C-type lectin domain maps to 34–149 (YEGHCYKVFN…CELAYHFICM (116 aa)).

The protein belongs to the snaclec family. Heterodimer; disulfide-linked. As to expression, expressed by the venom gland.

Its subcellular location is the secreted. Its function is as follows. Interferes with one step of hemostasis (modulation of platelet aggregation, or coagulation cascade, for example). In Macrovipera lebetinus (Levantine viper), this protein is Snaclec A12.